A 179-amino-acid chain; its full sequence is Segregation and condensation protein B (179 aa).

This sequence belongs to the ScpB family. Homodimer. Homodimerization may be required to stabilize the binding of ScpA to the Smc head domains. Component of a cohesin-like complex composed of ScpA, ScpB and the Smc homodimer, in which ScpA and ScpB bind to the head domain of Smc. The presence of the three proteins is required for the association of the complex with DNA.

It is found in the cytoplasm. Participates in chromosomal partition during cell division. May act via the formation of a condensin-like complex containing Smc and ScpA that pull DNA away from mid-cell into both cell halves. This is Segregation and condensation protein B from Staphylococcus haemolyticus (strain JCSC1435).